Consider the following 20-residue polypeptide: Hemocyanin subunit Ia (20 aa).

A disordered region spans residues 1-20; that stretch reads ADXQPGDSTDKLLAQKQDDV.

This sequence belongs to the tyrosinase family. Hemocyanin subfamily. As to quaternary structure, composed of 3 major subunits (IB, II and III) and 1 minor subunit (IA) which form homohexamers and heterohexamers. May also form larger structures. In terms of tissue distribution, hemolymph.

Its subcellular location is the secreted. It localises to the extracellular space. Hemocyanins are copper-containing oxygen carriers occurring freely dissolved in the hemolymph of many mollusks and arthropods. This is Hemocyanin subunit Ia from Panulirus japonicus (Japanese spiny lobster).